The following is a 122-amino-acid chain: Small ribosomal subunit protein uS13 (122 aa).

The tract at residues 97–122 (PVRGQRTHTNARTRKGPAKAIAGKKK) is disordered.

This sequence belongs to the universal ribosomal protein uS13 family. Part of the 30S ribosomal subunit. Forms a loose heterodimer with protein S19. Forms two bridges to the 50S subunit in the 70S ribosome.

Located at the top of the head of the 30S subunit, it contacts several helices of the 16S rRNA. In the 70S ribosome it contacts the 23S rRNA (bridge B1a) and protein L5 of the 50S subunit (bridge B1b), connecting the 2 subunits; these bridges are implicated in subunit movement. Contacts the tRNAs in the A and P-sites. In Brucella abortus (strain S19), this protein is Small ribosomal subunit protein uS13.